The following is a 1604-amino-acid chain: Transposon Ty1-DR4 Gag-Pol polyprotein (1604 aa).

3 stretches are compositionally biased toward polar residues: residues 1–23 (MESQ…SVTS), 48–60 (TKAN…TPAS), and 127–152 (QSQF…GNTF). Disordered stretches follow at residues 1-93 (MESQ…MMTQ), 126-174 (PQSQ…PPPM), and 352-421 (GSRN…SKST). The span at 153-165 (TDSSSADSDMTST) shows a compositional bias: low complexity. The tract at residues 299–401 (NNGIHINNKV…NSKSKTARAH (103 aa)) is RNA-binding. Over residues 402 to 418 (NVSTSNNSPSTDNDSIS) the composition is skewed to low complexity. At Ser-416 the chain carries Phosphoserine. The For protease activity; shared with dimeric partner role is filled by Asp-461. Positions 583-640 (NVHTSESTRKYPYPFIHRMLAHANAQTIRYSLKNNTITYFNESDVDWSSAIDYQCPDC) are integrase-type zinc finger-like. An Integrase catalytic domain is found at 660–835 (NSYEPFQYLH…AGLDISTLLP (176 aa)). 2 residues coordinate Mg(2+): Asp-671 and Asp-736. Disordered stretches follow at residues 956–1087 (SKAV…ETEK), 1092–1111 (RSPS…NIVP), and 1130–1187 (DLPL…DNET). Residues 960 to 969 (SPTDSTPPST) show a composition bias toward low complexity. Positions 1005-1015 (STPQISNIEST) are enriched in polar residues. Basic and acidic residues predominate over residues 1038–1053 (ESSHASKSKDFRHSDS). Composition is skewed to polar residues over residues 1054–1082 (YSEN…QISD) and 1101–1111 (PENNSSHNIVP). The Bipartite nuclear localization signal signature appears at 1178–1212 (KKRSLEDNETEIKVSRDTWNTKNMRSLEPPRSKKR). Residues 1338 to 1476 (NNYYITQLDI…DILGLEIKYQ (139 aa)) enclose the Reverse transcriptase Ty1/copia-type domain. Mg(2+) contacts are provided by Asp-1346, Asp-1427, and Asp-1428.

In terms of assembly, the capsid protein forms a homotrimer, from which the VLPs are assembled. The protease is a homodimer, whose active site consists of two apposed aspartic acid residues. Post-translationally, initially, virus-like particles (VLPs) are composed of the structural unprocessed proteins Gag and Gag-Pol, and also contain the host initiator methionine tRNA (tRNA(i)-Met) which serves as a primer for minus-strand DNA synthesis, and a dimer of genomic Ty RNA. Processing of the polyproteins occurs within the particle and proceeds by an ordered pathway, called maturation. First, the protease (PR) is released by autocatalytic cleavage of the Gag-Pol polyprotein yielding capsid protein p45 and a Pol-p154 precursor protein. This cleavage is a prerequisite for subsequent processing of Pol-p154 at the remaining sites to release the mature structural and catalytic proteins. Maturation takes place prior to the RT reaction and is required to produce transposition-competent VLPs.

The protein resides in the cytoplasm. Its subcellular location is the nucleus. It carries out the reaction DNA(n) + a 2'-deoxyribonucleoside 5'-triphosphate = DNA(n+1) + diphosphate. It catalyses the reaction Endonucleolytic cleavage to 5'-phosphomonoester.. Functionally, capsid protein (CA) is the structural component of the virus-like particle (VLP), forming the shell that encapsulates the retrotransposons dimeric RNA genome. The particles are assembled from trimer-clustered units and there are holes in the capsid shells that allow for the diffusion of macromolecules. CA also has nucleocapsid-like chaperone activity, promoting primer tRNA(i)-Met annealing to the multipartite primer-binding site (PBS), dimerization of Ty1 RNA and initiation of reverse transcription. Its function is as follows. The aspartyl protease (PR) mediates the proteolytic cleavages of the Gag and Gag-Pol polyproteins after assembly of the VLP. Reverse transcriptase/ribonuclease H (RT) is a multifunctional enzyme that catalyzes the conversion of the retro-elements RNA genome into dsDNA within the VLP. The enzyme displays a DNA polymerase activity that can copy either DNA or RNA templates, and a ribonuclease H (RNase H) activity that cleaves the RNA strand of RNA-DNA heteroduplexes during plus-strand synthesis and hydrolyzes RNA primers. The conversion leads to a linear dsDNA copy of the retrotransposon that includes long terminal repeats (LTRs) at both ends. In terms of biological role, integrase (IN) targets the VLP to the nucleus, where a subparticle preintegration complex (PIC) containing at least integrase and the newly synthesized dsDNA copy of the retrotransposon must transit the nuclear membrane. Once in the nucleus, integrase performs the integration of the dsDNA into the host genome. This chain is Transposon Ty1-DR4 Gag-Pol polyprotein (TY1B-DR4), found in Saccharomyces cerevisiae (strain ATCC 204508 / S288c) (Baker's yeast).